The following is a 149-amino-acid chain: Endoribonuclease YbeY (149 aa).

Residues His106, His110, and His116 each coordinate Zn(2+).

The protein belongs to the endoribonuclease YbeY family. It depends on Zn(2+) as a cofactor.

The protein resides in the cytoplasm. Single strand-specific metallo-endoribonuclease involved in late-stage 70S ribosome quality control and in maturation of the 3' terminus of the 16S rRNA. This chain is Endoribonuclease YbeY, found in Methylobacillus flagellatus (strain ATCC 51484 / DSM 6875 / VKM B-1610 / KT).